Here is a 217-residue protein sequence, read N- to C-terminus: Small ribosomal subunit protein uS3 (217 aa).

The KH type-2 domain maps to 38–106; sequence IRKFINKELA…QVHINIIEIK (69 aa).

Belongs to the universal ribosomal protein uS3 family. Part of the 30S ribosomal subunit. Forms a tight complex with proteins S10 and S14.

Functionally, binds the lower part of the 30S subunit head. Binds mRNA in the 70S ribosome, positioning it for translation. This is Small ribosomal subunit protein uS3 from Streptococcus pyogenes serotype M6 (strain ATCC BAA-946 / MGAS10394).